Reading from the N-terminus, the 163-residue chain is Endoribonuclease YbeY (163 aa).

Zn(2+) is bound by residues His-129, His-133, and His-139.

Belongs to the endoribonuclease YbeY family. Requires Zn(2+) as cofactor.

It localises to the cytoplasm. Single strand-specific metallo-endoribonuclease involved in late-stage 70S ribosome quality control and in maturation of the 3' terminus of the 16S rRNA. The chain is Endoribonuclease YbeY from Picosynechococcus sp. (strain ATCC 27264 / PCC 7002 / PR-6) (Agmenellum quadruplicatum).